Here is a 445-residue protein sequence, read N- to C-terminus: Chromosomal replication initiator protein DnaA (445 aa).

The domain I, interacts with DnaA modulators stretch occupies residues 1-73 (MSTHLTETWE…VNALKLLTSK (73 aa)). A domain II region spans residues 73-106 (KKYNIDFIVTTEEKIEKNHNNEKSNIVVNDEMST). Positions 107–323 (MLNPKYTFDS…GALIRIVAFS (217 aa)) are domain III, AAA+ region. ATP is bound by residues Gly-151, Gly-153, Lys-154, and Thr-155. The interval 324–445 (SLTNKEISVD…KELNKRINQK (122 aa)) is domain IV, binds dsDNA.

The protein belongs to the DnaA family. Oligomerizes as a right-handed, spiral filament on DNA at oriC.

The protein localises to the cytoplasm. In terms of biological role, plays an essential role in the initiation and regulation of chromosomal replication. ATP-DnaA binds to the origin of replication (oriC) to initiate formation of the DNA replication initiation complex once per cell cycle. Binds the DnaA box (a 9 base pair repeat at the origin) and separates the double-stranded (ds)DNA. Forms a right-handed helical filament on oriC DNA; dsDNA binds to the exterior of the filament while single-stranded (ss)DNA is stabiized in the filament's interior. The ATP-DnaA-oriC complex binds and stabilizes one strand of the AT-rich DNA unwinding element (DUE), permitting loading of DNA polymerase. After initiation quickly degrades to an ADP-DnaA complex that is not apt for DNA replication. Binds acidic phospholipids. In Clostridium botulinum (strain Okra / Type B1), this protein is Chromosomal replication initiator protein DnaA.